A 376-amino-acid chain; its full sequence is Histidinol-phosphate aminotransferase 1 (376 aa).

Lys235 carries the N6-(pyridoxal phosphate)lysine modification.

Belongs to the class-II pyridoxal-phosphate-dependent aminotransferase family. Histidinol-phosphate aminotransferase subfamily. As to quaternary structure, homodimer. It depends on pyridoxal 5'-phosphate as a cofactor.

The enzyme catalyses L-histidinol phosphate + 2-oxoglutarate = 3-(imidazol-4-yl)-2-oxopropyl phosphate + L-glutamate. Its pathway is amino-acid biosynthesis; L-histidine biosynthesis; L-histidine from 5-phospho-alpha-D-ribose 1-diphosphate: step 7/9. The protein is Histidinol-phosphate aminotransferase 1 of Cupriavidus pinatubonensis (strain JMP 134 / LMG 1197) (Cupriavidus necator (strain JMP 134)).